A 199-amino-acid chain; its full sequence is FMN-dependent NADH:quinone oxidoreductase (199 aa).

FMN is bound by residues 17-19 (SNS) and 87-90 (MYNF).

The protein belongs to the azoreductase type 1 family. In terms of assembly, homodimer. FMN is required as a cofactor.

The enzyme catalyses 2 a quinone + NADH + H(+) = 2 a 1,4-benzosemiquinone + NAD(+). It carries out the reaction N,N-dimethyl-1,4-phenylenediamine + anthranilate + 2 NAD(+) = 2-(4-dimethylaminophenyl)diazenylbenzoate + 2 NADH + 2 H(+). Its function is as follows. Quinone reductase that provides resistance to thiol-specific stress caused by electrophilic quinones. Also exhibits azoreductase activity. Catalyzes the reductive cleavage of the azo bond in aromatic azo compounds to the corresponding amines. The protein is FMN-dependent NADH:quinone oxidoreductase of Mycoplasma mycoides subsp. mycoides SC (strain CCUG 32753 / NCTC 10114 / PG1).